The sequence spans 391 residues: Probable sugar efflux transporter (391 aa).

Transmembrane regions (helical) follow at residues 16–36, 51–71, 82–102, 103–123, 138–158, 170–190, 210–230, 247–267, 277–297, 300–320, 338–358, and 361–381; these read VFVFSLSAFIFNTTEFVPVAL, VGLMITAYAWVVSLGSLPLML, LLFLFALFILSHILSALAWNF, WVLLISRMGIAFAHSIFWSIT, QALGLLALGSSLAMILGLPLG, TFGVIGGVATLIMLLMWKLLP, PLLVGIYLLVIMVISGHFTTY, ITTLMLFVFGLAGVAGSFLFG, FIAFAMVLVICPQLLLFVFKN, WVIFLQIFLWGIGITSLTIAL, IFSGSYNVGIGSGALFGSIVI, and LGLEYIGFVGGALGLLALFWL.

Belongs to the major facilitator superfamily. SotB (TC 2.A.1.2) family.

It localises to the cell inner membrane. Involved in the efflux of sugars. The physiological role may be the reduction of the intracellular concentration of toxic sugars or sugar metabolites. The polypeptide is Probable sugar efflux transporter (Helicobacter pylori (strain P12)).